The primary structure comprises 341 residues: Anthranilate phosphoribosyltransferase (341 aa).

5-phospho-alpha-D-ribose 1-diphosphate-binding positions include G79, 82 to 83 (GD), T87, 89 to 92 (NIST), 107 to 115 (KHGNRAASS), and S119. G79 contributes to the anthranilate binding site. S91 is a Mg(2+) binding site. N110 is an anthranilate binding site. R165 lines the anthranilate pocket. Mg(2+)-binding residues include D224 and E225.

It belongs to the anthranilate phosphoribosyltransferase family. As to quaternary structure, homodimer. Requires Mg(2+) as cofactor.

It carries out the reaction N-(5-phospho-beta-D-ribosyl)anthranilate + diphosphate = 5-phospho-alpha-D-ribose 1-diphosphate + anthranilate. The protein operates within amino-acid biosynthesis; L-tryptophan biosynthesis; L-tryptophan from chorismate: step 2/5. In terms of biological role, catalyzes the transfer of the phosphoribosyl group of 5-phosphorylribose-1-pyrophosphate (PRPP) to anthranilate to yield N-(5'-phosphoribosyl)-anthranilate (PRA). The polypeptide is Anthranilate phosphoribosyltransferase (Dehalococcoides mccartyi (strain ATCC BAA-2266 / KCTC 15142 / 195) (Dehalococcoides ethenogenes (strain 195))).